The following is a 186-amino-acid chain: Probable nicotinate-nucleotide adenylyltransferase (186 aa).

This sequence belongs to the NadD family.

It catalyses the reaction nicotinate beta-D-ribonucleotide + ATP + H(+) = deamido-NAD(+) + diphosphate. The protein operates within cofactor biosynthesis; NAD(+) biosynthesis; deamido-NAD(+) from nicotinate D-ribonucleotide: step 1/1. Catalyzes the reversible adenylation of nicotinate mononucleotide (NaMN) to nicotinic acid adenine dinucleotide (NaAD). The polypeptide is Probable nicotinate-nucleotide adenylyltransferase (Thermus thermophilus (strain ATCC BAA-163 / DSM 7039 / HB27)).